Reading from the N-terminus, the 224-residue chain is Ribose-5-phosphate isomerase A 1 (224 aa).

Substrate is bound by residues 29–32 (SGST), 85–88 (DGAD), and 98–101 (KGGG). The Proton acceptor role is filled by glutamate 107. Lysine 125 is a binding site for substrate.

This sequence belongs to the ribose 5-phosphate isomerase family. Homodimer.

It catalyses the reaction aldehydo-D-ribose 5-phosphate = D-ribulose 5-phosphate. The protein operates within carbohydrate degradation; pentose phosphate pathway; D-ribose 5-phosphate from D-ribulose 5-phosphate (non-oxidative stage): step 1/1. Functionally, catalyzes the reversible conversion of ribose-5-phosphate to ribulose 5-phosphate. The protein is Ribose-5-phosphate isomerase A 1 of Oceanobacillus iheyensis (strain DSM 14371 / CIP 107618 / JCM 11309 / KCTC 3954 / HTE831).